Consider the following 537-residue polypeptide: Glucose-6-phosphate isomerase (537 aa).

The active-site Proton donor is Glu355. Active-site residues include His386 and Lys501.

It belongs to the GPI family.

Its subcellular location is the cytoplasm. It catalyses the reaction alpha-D-glucose 6-phosphate = beta-D-fructose 6-phosphate. It participates in carbohydrate biosynthesis; gluconeogenesis. Its pathway is carbohydrate degradation; glycolysis; D-glyceraldehyde 3-phosphate and glycerone phosphate from D-glucose: step 2/4. Its function is as follows. Catalyzes the reversible isomerization of glucose-6-phosphate to fructose-6-phosphate. The sequence is that of Glucose-6-phosphate isomerase from Protochlamydia amoebophila (strain UWE25).